A 191-amino-acid polypeptide reads, in one-letter code: ECF RNA polymerase sigma-E factor (191 aa).

The interval 1 to 153 (MSEQLTDQVL…MAITLRELDG (153 aa)) is binds RNAP core. The sigma-70 factor domain-2 stretch occupies residues 25-92 (LVVRYQHKVA…KNYLVAQGRR (68 aa)). The short motif at 48 to 61 (DVVQESFIKAYRAL) is the Polymerase core binding element. Positions 129-180 (QIVFRTIESLPEDLRMAITLRELDGLSYEEIAAIMDCPVGTVRSRIFRAREA) are sigma-70 factor domain-4. The segment at residues 156–175 (YEEIAAIMDCPVGTVRSRIF) is a DNA-binding region (H-T-H motif).

It belongs to the sigma-70 factor family. ECF subfamily. As to quaternary structure, interacts transiently with the RNAP catalytic core formed by RpoA, RpoB, RpoC and RpoZ (2 alpha, 1 beta, 1 beta' and 1 omega subunit) to form the RNAP holoenzyme that can initiate transcription. Interacts 1:1 with anti-sigma-E factor RseA which prevents binding to RNAP catalytic core.

The protein resides in the cytoplasm. With respect to regulation, ECF sigma-E is held in an inactive form by its cognate anti-sigma factor (RseA) until released by regulated intramembrane proteolysis (RIP). RIP occurs when an extracytoplasmic signal (periplasmic, acid or heat stress) triggers a concerted proteolytic cascade to transmit information and elicit cellular responses. In S.typhimurium there are 2 cascades, the heat shock response which depends on DegS and RseP, and acid response which depends only on RseP. The anti-sigma factor RseA is an inner membrane protein, binding sigma-E in the cytoplasm and RseB in the periplasm. RseA is first cut extracytoplasmically (site-1 protease, S1P, by DegS), then within the membrane itself (site-2 protease, S2P, by RseP), while cytoplasmic proteases (predominantly ClpX-ClpP) finish degrading the regulatory protein, liberating sigma-E. Degradation of RseA requires 2 signals to activate DegS; an outer membrane protein (OMP) signal activates DegS, while an LPS signal causes release of RseB from RseA, freeing RseA to be cleaved. OMP stress can be abrogated by overexpression of the sRNA rybB. Sigma factors are initiation factors that promote the attachment of RNA polymerase (RNAP) to specific initiation sites and are then released. Extracytoplasmic function (ECF) sigma-E controls the envelope stress response, responding to periplasmic protein stress, increased levels of periplasmic lipopolysaccharide (LPS) as well as acid stress, heat shock and oxidative stress; it controls protein processing in the extracytoplasmic compartment. The polypeptide is ECF RNA polymerase sigma-E factor (rpoE) (Salmonella typhimurium (strain 14028s / SGSC 2262)).